We begin with the raw amino-acid sequence, 295 residues long: 4-hydroxy-tetrahydrodipicolinate synthase (295 aa).

T48 is a binding site for pyruvate. Residue Y136 is the Proton donor/acceptor of the active site. Residue K164 is the Schiff-base intermediate with substrate of the active site. I206 serves as a coordination point for pyruvate.

The protein belongs to the DapA family. In terms of assembly, homotetramer; dimer of dimers.

It is found in the cytoplasm. The enzyme catalyses L-aspartate 4-semialdehyde + pyruvate = (2S,4S)-4-hydroxy-2,3,4,5-tetrahydrodipicolinate + H2O + H(+). It participates in amino-acid biosynthesis; L-lysine biosynthesis via DAP pathway; (S)-tetrahydrodipicolinate from L-aspartate: step 3/4. Its function is as follows. Catalyzes the condensation of (S)-aspartate-beta-semialdehyde [(S)-ASA] and pyruvate to 4-hydroxy-tetrahydrodipicolinate (HTPA). This Actinobacillus pleuropneumoniae serotype 5b (strain L20) protein is 4-hydroxy-tetrahydrodipicolinate synthase.